Reading from the N-terminus, the 436-residue chain is uncharacterized protein (436 aa).

A run of 12 helical transmembrane segments spans residues 38-58 (ILIF…TVGA), 70-90 (VAGI…LLIG), 102-122 (LAGG…AALI), 125-145 (VALL…NLQV), 160-180 (TAAS…PNLV), 197-217 (GPFI…LIFL), 254-274 (IMVG…IMTM), 291-311 (LVIG…GLLV), 319-339 (MAIA…IAPA), 342-362 (LSLL…GLLT), 383-403 (FDVL…MVVA), and 409-429 (ILSI…IWYF).

It belongs to the major facilitator superfamily.

The protein resides in the cell membrane. This is an uncharacterized protein from Bacillus subtilis (strain 168).